A 215-amino-acid chain; its full sequence is Probable GTP-binding protein EngB (215 aa).

The region spanning 30 to 204 is the EngB-type G domain; sequence EGLEVAFAGR…QMVLAQWLGL (175 aa). GTP-binding positions include 38-45, 64-68, 82-85, 149-152, and 182-185; these read GRSNAGKS, GRTQL, DLPG, TKAD, and LFSA. 2 residues coordinate Mg(2+): Ser45 and Thr66.

This sequence belongs to the TRAFAC class TrmE-Era-EngA-EngB-Septin-like GTPase superfamily. EngB GTPase family. Mg(2+) is required as a cofactor.

In terms of biological role, necessary for normal cell division and for the maintenance of normal septation. The sequence is that of Probable GTP-binding protein EngB from Pseudomonas aeruginosa (strain ATCC 15692 / DSM 22644 / CIP 104116 / JCM 14847 / LMG 12228 / 1C / PRS 101 / PAO1).